The following is a 40-amino-acid chain: Dolichyl-diphosphooligosaccharide--protein glycosyltransferase subunit 4 (40 aa).

Residues 1 to 4 (MITD) are Lumenal-facing. The helical transmembrane segment at 5–25 (VQLAIFSNVLGVFLFLLVVAY) threads the bilayer. At 26–40 (HYINANTGKSSIKTK) the chain is on the cytoplasmic side.

It belongs to the OST4 family. Component of the oligosaccharyltransferase (OST) complex.

The protein resides in the endoplasmic reticulum membrane. Subunit of the oligosaccharyl transferase (OST) complex that catalyzes the initial transfer of a defined glycan (Glc(3)Man(9)GlcNAc(2) in eukaryotes) from the lipid carrier dolichol-pyrophosphate to an asparagine residue within an Asn-X-Ser/Thr consensus motif in nascent polypeptide chains, the first step in protein N-glycosylation. N-glycosylation occurs cotranslationally and the complex associates with the Sec61 complex at the channel-forming translocon complex that mediates protein translocation across the endoplasmic reticulum (ER). All subunits are required for a maximal enzyme activity. This chain is Dolichyl-diphosphooligosaccharide--protein glycosyltransferase subunit 4, found in Drosophila virilis (Fruit fly).